The chain runs to 333 residues: Protein-methionine-sulfoxide reductase catalytic subunit MsrP (333 aa).

A signal peptide (tat-type signal) is located at residues 1–43 (MSKQRKLTEADVTPESVFYQRRKVLQALGITAASLALPHNAQA). Mo-molybdopterin is bound by residues asparagine 87, 90–91 (YE), cysteine 145, threonine 180, asparagine 232, arginine 237, and 248–250 (GIK).

This sequence belongs to the MsrP family. As to quaternary structure, heterodimer of a catalytic subunit (MsrP) and a heme-binding subunit (MsrQ). Mo-molybdopterin serves as cofactor. Predicted to be exported by the Tat system. The position of the signal peptide cleavage has not been experimentally proven.

The protein localises to the periplasm. It catalyses the reaction L-methionyl-[protein] + a quinone + H2O = L-methionyl-(S)-S-oxide-[protein] + a quinol. The enzyme catalyses L-methionyl-[protein] + a quinone + H2O = L-methionyl-(R)-S-oxide-[protein] + a quinol. Functionally, part of the MsrPQ system that repairs oxidized periplasmic proteins containing methionine sulfoxide residues (Met-O), using respiratory chain electrons. Thus protects these proteins from oxidative-stress damage caused by reactive species of oxygen and chlorine generated by the host defense mechanisms. MsrPQ is essential for the maintenance of envelope integrity under bleach stress, rescuing a wide series of structurally unrelated periplasmic proteins from methionine oxidation. The catalytic subunit MsrP is non-stereospecific, being able to reduce both (R-) and (S-) diastereoisomers of methionine sulfoxide. The polypeptide is Protein-methionine-sulfoxide reductase catalytic subunit MsrP (Serratia proteamaculans (strain 568)).